Reading from the N-terminus, the 286-residue chain is Enoyl-CoA hydratase ChsH3 (286 aa).

The 109-residue stretch at 163-271 folds into the MaoC-like domain; that stretch reads APERAPDLQV…RLVASVVAPT (109 aa). Active-site residues include D189 and H194.

This sequence belongs to the enoyl-CoA hydratase/isomerase family. Homodimer.

The enzyme catalyses (22E)-3-oxochola-4,22-dien-24-oyl-CoA + H2O = (22S)-hydroxy-3-oxo-chol-4-ene-24-oyl-CoA. It functions in the pathway steroid metabolism; cholesterol degradation. Degradation of the cholesterol side chain involves 3 multistep beta-oxidation cycles, this is involved in the second cycle. Hydrates bulky steroid enoyl-CoA esters, has highest activity with 3-OCDO-CoA (3-oxochol-4,22-dien-24-oyl-CoA) making (22S)-HOCO-CoA, followed by octenoyl-CoA, with weaker activity on 3-OCDS-CoA (3-oxocholest-4,24-dien-26-oyl-CoA) and none on 3-OPDC-CoA (3-oxo-pregna-4,17-diene-20- carboxyl-CoA). Hydrates the same substrate as EchA19, but the 2 enzymes make different stereoisomers of the product. The chain is Enoyl-CoA hydratase ChsH3 from Mycobacterium tuberculosis (strain ATCC 25618 / H37Rv).